The chain runs to 397 residues: Alpha-2B adrenergic receptor (397 aa).

Residues 1-25 (AIAAIIIFLILFTIFGNALVILAVL) traverse the membrane as a helical segment. At 26–36 (TSRSLRAPQNL) the chain is on the cytoplasmic side. A helical membrane pass occupies residues 37–62 (FLVSLAAADILVATLIIPFSLANELL). Residues 63 to 72 (GYWYFRRMWC) are Extracellular-facing. Cys-72 and Cys-151 are oxidised to a cystine. Residues 73–95 (KVYLALDVLFCTSSIVHLCAISL) traverse the membrane as a helical segment. Residues 96–117 (DRYWAVSRALEYNSKRTPRRIK) are Cytoplasmic-facing. Residues 118–140 (CIILMVWLIAAVISLPSLVYKGD) traverse the membrane as a helical segment. At 141–156 (QGPQPSGAPQCNLNQE) the chain is on the extracellular side. The helical transmembrane segment at 157-180 (TWYILASSIGSFFAPCLIMILVYL) threads the bilayer. Residues 181–361 (RIYLIAKRSH…LSREKRFTFV (181 aa)) lie on the Cytoplasmic side of the membrane. Disordered stretches follow at residues 193-212 (GPRA…RQVP) and 230-319 (AAGE…LQQP). The span at 280–300 (SLEEEAEEEEEGEEEREEECE) shows a compositional bias: acidic residues. Low complexity predominate over residues 301–319 (PQALPASPASACSPPLQQP). A helical membrane pass occupies residues 362-385 (LAVVIGVFVLCWFPFFFSYSLGAI). Topologically, residues 386 to 394 (CPQQCKVPH) are extracellular. The chain crosses the membrane as a helical span at residues 395-397 (DLF).

Belongs to the G-protein coupled receptor 1 family. Adrenergic receptor subfamily. ADRA2B sub-subfamily. Interacts with RAB26. Interacts with PPP1R9B.

The protein localises to the cell membrane. Functionally, alpha-2 adrenergic receptors mediate the catecholamine-induced inhibition of adenylate cyclase through the action of G proteins. The polypeptide is Alpha-2B adrenergic receptor (ADRA2B) (Talpa europaea (European mole)).